A 176-amino-acid chain; its full sequence is ATP-dependent protease subunit HslV (176 aa).

The active site involves Thr-2. Na(+) contacts are provided by Gly-157, Cys-160, and Thr-163.

Belongs to the peptidase T1B family. HslV subfamily. As to quaternary structure, a double ring-shaped homohexamer of HslV is capped on each side by a ring-shaped HslU homohexamer. The assembly of the HslU/HslV complex is dependent on binding of ATP.

Its subcellular location is the cytoplasm. The enzyme catalyses ATP-dependent cleavage of peptide bonds with broad specificity.. With respect to regulation, allosterically activated by HslU binding. Protease subunit of a proteasome-like degradation complex believed to be a general protein degrading machinery. The protein is ATP-dependent protease subunit HslV of Proteus mirabilis (strain HI4320).